The chain runs to 199 residues: Thymidylate kinase (199 aa).

7–14 (GTEGVGKT) lines the ATP pocket.

The protein belongs to the thymidylate kinase family.

It catalyses the reaction dTMP + ATP = dTDP + ADP. Functionally, phosphorylation of dTMP to form dTDP in both de novo and salvage pathways of dTTP synthesis. The protein is Thymidylate kinase of Acinetobacter baumannii (strain AB307-0294).